A 121-amino-acid chain; its full sequence is MILNNKGFIRILEATIAGIMVILVFSYLVMSQNFDYNLSLEFIGYNALYSAHIEEGDFENISSLYKKIELPSNVGYGFEIYKNGNLIYSDAKNGVVVERNFIFENNTSVNFYKLRLILWWR.

An N-terminal signal peptide occupies residues 1–31 (MILNNKGFIRILEATIAGIMVILVFSYLVMS).

The protein to B.burgdorferi BB0465 N-terminal region.

This is an uncharacterized protein from Methanocaldococcus jannaschii (strain ATCC 43067 / DSM 2661 / JAL-1 / JCM 10045 / NBRC 100440) (Methanococcus jannaschii).